A 256-amino-acid polypeptide reads, in one-letter code: Thiazole synthase (256 aa).

Catalysis depends on lysine 95, which acts as the Schiff-base intermediate with DXP. Residues glycine 156, 182–183 (AG), and 204–205 (NT) contribute to the 1-deoxy-D-xylulose 5-phosphate site.

It belongs to the ThiG family. In terms of assembly, homotetramer. Forms heterodimers with either ThiH or ThiS.

It is found in the cytoplasm. The catalysed reaction is [ThiS sulfur-carrier protein]-C-terminal-Gly-aminoethanethioate + 2-iminoacetate + 1-deoxy-D-xylulose 5-phosphate = [ThiS sulfur-carrier protein]-C-terminal Gly-Gly + 2-[(2R,5Z)-2-carboxy-4-methylthiazol-5(2H)-ylidene]ethyl phosphate + 2 H2O + H(+). It participates in cofactor biosynthesis; thiamine diphosphate biosynthesis. In terms of biological role, catalyzes the rearrangement of 1-deoxy-D-xylulose 5-phosphate (DXP) to produce the thiazole phosphate moiety of thiamine. Sulfur is provided by the thiocarboxylate moiety of the carrier protein ThiS. In vitro, sulfur can be provided by H(2)S. The protein is Thiazole synthase of Escherichia coli (strain K12 / MC4100 / BW2952).